We begin with the raw amino-acid sequence, 278 residues long: UPF0276 protein Ssed_2857 (278 aa).

The protein belongs to the UPF0276 family.

The protein is UPF0276 protein Ssed_2857 of Shewanella sediminis (strain HAW-EB3).